A 381-amino-acid chain; its full sequence is Dual-specificity RNA methyltransferase RlmN (381 aa).

Glutamate 95 serves as the catalytic Proton acceptor. The region spanning 101–347 (EDDRGTLCVS…TTVRKTRGDD (247 aa)) is the Radical SAM core domain. An intrachain disulfide couples cysteine 108 to cysteine 352. Positions 115, 119, and 122 each coordinate [4Fe-4S] cluster. Residues 178–179 (GE), serine 210, 232–234 (SLH), and asparagine 309 contribute to the S-adenosyl-L-methionine site. Cysteine 352 functions as the S-methylcysteine intermediate in the catalytic mechanism.

It belongs to the radical SAM superfamily. RlmN family. It depends on [4Fe-4S] cluster as a cofactor.

It localises to the cytoplasm. The enzyme catalyses adenosine(2503) in 23S rRNA + 2 reduced [2Fe-2S]-[ferredoxin] + 2 S-adenosyl-L-methionine = 2-methyladenosine(2503) in 23S rRNA + 5'-deoxyadenosine + L-methionine + 2 oxidized [2Fe-2S]-[ferredoxin] + S-adenosyl-L-homocysteine. It carries out the reaction adenosine(37) in tRNA + 2 reduced [2Fe-2S]-[ferredoxin] + 2 S-adenosyl-L-methionine = 2-methyladenosine(37) in tRNA + 5'-deoxyadenosine + L-methionine + 2 oxidized [2Fe-2S]-[ferredoxin] + S-adenosyl-L-homocysteine. Specifically methylates position 2 of adenine 2503 in 23S rRNA and position 2 of adenine 37 in tRNAs. m2A2503 modification seems to play a crucial role in the proofreading step occurring at the peptidyl transferase center and thus would serve to optimize ribosomal fidelity. The chain is Dual-specificity RNA methyltransferase RlmN from Bordetella petrii (strain ATCC BAA-461 / DSM 12804 / CCUG 43448).